We begin with the raw amino-acid sequence, 339 residues long: Glucokinase (339 aa).

16 to 21 contributes to the ATP binding site; sequence GDIGGT.

Belongs to the bacterial glucokinase family.

Its subcellular location is the cytoplasm. It catalyses the reaction D-glucose + ATP = D-glucose 6-phosphate + ADP + H(+). The polypeptide is Glucokinase (Pseudomonas paraeruginosa (strain DSM 24068 / PA7) (Pseudomonas aeruginosa (strain PA7))).